The chain runs to 332 residues: Arabinogalactan endo-beta-1,4-galactanase (332 aa).

Asparagine 111 carries an N-linked (GlcNAc...) asparagine glycan. Glutamate 135 functions as the Proton donor in the catalytic mechanism. Glutamate 245 functions as the Nucleophile in the catalytic mechanism.

The protein belongs to the glycosyl hydrolase 53 family.

It carries out the reaction The enzyme specifically hydrolyzes (1-&gt;4)-beta-D-galactosidic linkages in type I arabinogalactans.. In Humicola insolens (Soft-rot fungus), this protein is Arabinogalactan endo-beta-1,4-galactanase.